We begin with the raw amino-acid sequence, 456 residues long: Acid sphingomyelinase-like phosphodiesterase 3b (456 aa).

Residues 1–18 (MTLLGWLIFLAPWGVAGA) form the signal peptide. Residues Asp-28 and His-30 each contribute to the Zn(2+) site. Residue Asn-34 is glycosylated (N-linked (GlcNAc...) asparagine). Cys-45 and Cys-64 are oxidised to a cystine. N-linked (GlcNAc...) asparagine glycosylation is present at Asn-72. Asp-93 serves as a coordination point for Zn(2+). Asn-100 carries N-linked (GlcNAc...) asparagine glycosylation. Residue Asn-134 coordinates Zn(2+). Asn-164 and Asn-223 each carry an N-linked (GlcNAc...) asparagine glycan. Residues His-236, His-277, and His-279 each contribute to the Zn(2+) site. 2 disulfides stabilise this stretch: Cys-405–Cys-409 and Cys-415–Cys-428.

This sequence belongs to the acid sphingomyelinase family. Interacts with TLR4, TLR7, TLR8 and TLR9. Zn(2+) is required as a cofactor. N-glycosylated. As to expression, macrophages and dendritic cells.

The protein localises to the secreted. The protein resides in the cell membrane. Its function is as follows. Lipid-modulating phosphodiesterase. Active on the surface of macrophages and dendritic cells and strongly influences macrophage lipid composition and membrane fluidity. Acts as a negative regulator of Toll-like receptor signaling. Has in vitro phosphodiesterase activity, but the physiological substrate is unknown. Lacks activity with phosphocholine-containing lipids, but can cleave CDP-choline, and can release phosphate from ATP and ADP (in vitro). The polypeptide is Acid sphingomyelinase-like phosphodiesterase 3b (Smpdl3b) (Mus musculus (Mouse)).